A 422-amino-acid chain; its full sequence is MPGTSRHSGRDAGSALLSLHQEDQENVNPEKLAPAQQPRAQAVLKAGNVRGPAPQQKLKTRRVAPLKDLPINDEHVTAGPSWKAVSKQPAFTIHVDEAEETQKRPAELKETECEDALAFNAAVSLPGARKPLTPLDYPMDGSFESPHAMDMSIVLEDKPVNVNEVPDYQEDIHTYLREMEVKCKPKVGYMKRQPDITNSMRAILVDWLVEVGEEYKLQNETLHLAVNYIDRFLSSMSVLRGKLQLVGTAAMLLASKFEEIYPPEVAEFVYITDDTYSKKQVLRMEHLVLKVLAFDLAAPTVNQFLTQYFLHLQPANCKVESLAMFLGELSLIDADPYLKYLPSLIAGAAFHLALYTVTGQSWPESLAQQTGYTLESLKPCLVDLHQTYLKAPQHAQQSIREKYKHSKYHSVSLLNPPETLSV.

At methionine 1 the chain carries N-acetylmethionine. Residues 1–62 are disordered; sequence MPGTSRHSGR…APQQKLKTRR (62 aa). The residue at position 5 (serine 5) is a Phosphoserine.

It belongs to the cyclin family. Cyclin AB subfamily. In terms of assembly, interacts with the CDK1 and CDK2 protein kinases to form serine/threonine kinase holoenzyme complexes. Interacts with CDK1 (hyperphosphorylated form in G1 and underphosphorylated forms in S and G2). Interacts with CDK2; the interaction increases from G1 to G2. Interacts (associated with CDK2 but not with CDK1) with SCAPER; regulates the activity of CCNA2/CDK2 by transiently maintaining CCNA2 in the cytoplasm. Forms a ternary complex with CDK2 and CDKN1B; CDKN1B inhibits the kinase activity of CDK2 through conformational rearrangements. Interacts with INCA1. (Microbial infection) Interacts with mouse cytomegalovirus/MCMV kinase M97; this interaction sequesters CCNA2 to the cytoplasm. Polyubiquitinated via 'Lys-11'-linked ubiquitin by the anaphase-promoting complex (APC/C), leading to its degradation by the proteasome. Deubiquitinated and stabilized by USP37 enables entry into S phase. Ubiquitinated during the G1 phase by the SCF(FBXO31) complex, leading to its proteasomal degradation. In terms of tissue distribution, ubiquitous. In the testis, expressed in germ cells and in the ovary, in both germline and somatic cells.

The protein localises to the nucleus. Its subcellular location is the cytoplasm. Cyclin which controls both the G1/S and the G2/M transition phases of the cell cycle. Functions through the formation of specific serine/threonine kinase holoenzyme complexes with the cyclin-dependent protein kinases CDK1 and CDK2. The cyclin subunit confers the substrate specificity of these complexes and differentially interacts with and activates CDK1 and CDK2 throughout the cell cycle. This is Cyclin-A2 from Mus musculus (Mouse).